The primary structure comprises 228 residues: 7-cyano-7-deazaguanine synthase (228 aa).

16–26 (FSGGQDSTTCL) lines the ATP pocket. The Zn(2+) site is built by Cys195, Cys203, Cys206, and Cys209.

The protein belongs to the QueC family. Zn(2+) is required as a cofactor.

The enzyme catalyses 7-carboxy-7-deazaguanine + NH4(+) + ATP = 7-cyano-7-deazaguanine + ADP + phosphate + H2O + H(+). It participates in purine metabolism; 7-cyano-7-deazaguanine biosynthesis. In terms of biological role, catalyzes the ATP-dependent conversion of 7-carboxy-7-deazaguanine (CDG) to 7-cyano-7-deazaguanine (preQ(0)). The sequence is that of 7-cyano-7-deazaguanine synthase from Haemophilus influenzae (strain ATCC 51907 / DSM 11121 / KW20 / Rd).